Here is a 332-residue protein sequence, read N- to C-terminus: NADH-quinone oxidoreductase subunit H (332 aa).

9 consecutive transmembrane segments (helical) span residues 4–24 (FAFFALETLIKCIIIIAIFAS), 44–64 (IGPDMVGPFGLIQLVADMIKL), 78–98 (FIFAIAPLISAICAFVSLAAI), 120–140 (VALLFVIGTSGLCFYAVFLGG), 165–185 (VGALALIAIIMLVGSFSLVDI), 194–214 (FSWLIFKQPLAFVLFIIALFI), 255–275 (IAGAILVTLLFLGGFNSFWII), 279–299 (IMMIVKSSFIFFWYFWARAAF), and 312–332 (YLILIPLAVLNLLITALTVLL).

This sequence belongs to the complex I subunit 1 family. NDH-1 is composed of 14 different subunits. Subunits NuoA, H, J, K, L, M, N constitute the membrane sector of the complex.

The protein localises to the cell inner membrane. It carries out the reaction a quinone + NADH + 5 H(+)(in) = a quinol + NAD(+) + 4 H(+)(out). NDH-1 shuttles electrons from NADH, via FMN and iron-sulfur (Fe-S) centers, to quinones in the respiratory chain. The immediate electron acceptor for the enzyme in this species is believed to be ubiquinone. Couples the redox reaction to proton translocation (for every two electrons transferred, four hydrogen ions are translocated across the cytoplasmic membrane), and thus conserves the redox energy in a proton gradient. This subunit may bind ubiquinone. The polypeptide is NADH-quinone oxidoreductase subunit H (Campylobacter jejuni subsp. jejuni serotype O:2 (strain ATCC 700819 / NCTC 11168)).